The primary structure comprises 682 residues: Epithelial sodium channel subunit alpha (682 aa).

Over 1 to 111 the chain is Cytoplasmic; that stretch reads MLMRLLPLPS…CSKHNRMKTA (111 aa). The disordered stretch occupies residues 34-69; that stretch reads AQGPLPPQPLQGPLKGDKCEQPGLGPEPTAPQQHTE. Residues 112-132 form a helical membrane-spanning segment; sequence FWAVLWLCTFGMMYWQFALLF. Residues 133 to 586 are Extracellular-facing; sequence GEYFSYPVSL…SQWSLWFGSS (454 aa). Disulfide bonds link cysteine 159–cysteine 329, cysteine 253–cysteine 260, cysteine 306–cysteine 313, cysteine 418–cysteine 503, cysteine 440–cysteine 480, cysteine 440–cysteine 499, cysteine 444–cysteine 495, cysteine 453–cysteine 480, cysteine 453–cysteine 503, and cysteine 455–cysteine 469. N-linked (GlcNAc...) asparagine glycosylation is present at asparagine 191. A gating release of inhibition by proteolysis (GRIP); protease-sensitive region that is responsible for the proteolytic activation of the channel region spans residues 201 to 267; sequence RSRRSLADTL…SDCFYQTSSS (67 aa). The tract at residues 221–240 is disordered; sequence PEPRRARSSDPSSVRDNNPR. N-linked (GlcNAc...) asparagine glycosylation occurs at asparagine 504. The chain crosses the membrane as a helical span at residues 587–607; sequence VLSVVEMAEFMFDLLVITLLM. Residues 608–682 are Cytoplasmic-facing; sequence LLRRFRSRYW…SSAACAPREP (75 aa). The PY motif; recruits WW domain-containing proteins and is thereby required for ubiquitination and inhibition of the channel by NEDD4 and NEDD4L motif lies at 653–657; it reads PPPAY.

This sequence belongs to the amiloride-sensitive sodium channel (TC 1.A.6) family. SCNN1A subfamily. In terms of assembly, heterotrimer; containing an alpha/SCNN1A, a beta/SCNN1B and a gamma/SCNN1G subunit. Interacts with WWP1 (via WW domains). Interacts with WWP2 (via WW domains); inhibits the channel. Interacts with BPIFA1; the interaction is indirect via SCNN1B and inhibits the proteolytic processing of SCNN1A and SCNN1G and the activation of ENaC. Interacts with the full-length immature form of PCSK9 (pro-PCSK9). Ubiquitinated. Can be ubiquitinated at multiple sites and undergo monoubiquitination and polyubiquitination. Ubiquitination by NEDD4 or NEDD4L inhibits the ENaC channel through endocytosis, intracellular retention and degradation of its individual subunits. In terms of processing, N-glycosylated. Post-translationally, ENaC is activated through the proteolytic maturation of its subunits. Furin cleaves the SCNN1A subunit, which results in a stepwise increase in the open probability of the channel due to the release of an inhibitory tract. BPIFA1, which is recruited by the SCNN1B subunit, prevents the proteolytic activation of ENaC.

It is found in the apical cell membrane. Its subcellular location is the cell projection. The protein resides in the cilium. The protein localises to the cytoplasmic granule. It localises to the cytoplasm. It is found in the cytoplasmic vesicle. Its subcellular location is the secretory vesicle. The protein resides in the acrosome. The protein localises to the flagellum. The catalysed reaction is Na(+)(in) = Na(+)(out). Originally identified and characterized by its inhibition by the diuretic drug amiloride. Its function is as follows. This is one of the three pore-forming subunits of the heterotrimeric epithelial sodium channel (ENaC), a critical regulator of sodium balance and fluid homeostasis. ENaC operates in epithelial tissues, where it mediates the electrodiffusion of sodium ions from extracellular fluid through the apical membrane of cells, with water following osmotically. It plays a key role in maintaining sodium homeostasis through electrogenic sodium reabsorption in the kidneys. Additionally, ENaC is essential for airway surface liquid homeostasis, which is crucial for proper mucus clearance. The polypeptide is Epithelial sodium channel subunit alpha (Cavia porcellus (Guinea pig)).